The following is an 85-amino-acid chain: Metallothionein-like protein 4B (85 aa).

Residues 1–20 form a disordered region; that stretch reads MADTGKGSASASCNDRCGCP.

This sequence belongs to the metallothionein superfamily. Type 15 family. Expressed specifically in seeds.

It is found in the cytoplasm. The protein localises to the nucleus. The protein resides in the cell membrane. Functionally, metallothioneins have a high content of cysteine residues that bind various heavy metals. Functions as a metal chelator of copper (Cu) and zinc (Zn). Plays a role in storing and distributing Zn ion in seed. The chain is Metallothionein-like protein 4B (MT4B) from Arabidopsis thaliana (Mouse-ear cress).